The following is a 354-amino-acid chain: Rhodopsin (354 aa).

Residues 1-36 (MNGTEGPAFYVPMSNATGVVRSPYEYPQYYLVAPWA) lie on the Extracellular side of the membrane. Asn2 and Asn15 each carry an N-linked (GlcNAc...) asparagine glycan. Residues 37–61 (YGLLAAYMFFLIITGFPVNFLTLYV) form a helical membrane-spanning segment. Residues 62 to 73 (TIEHKKLRTPLN) lie on the Cytoplasmic side of the membrane. Residues 74 to 96 (YILLNLAIADLFMVFGGFTTTMY) traverse the membrane as a helical segment. The Extracellular segment spans residues 97–110 (TSLHGYFVFGRLGC). Cysteines 110 and 187 form a disulfide. Residues 111 to 133 (NLEGFFATLGGEMGLWSLVVLAI) form a helical membrane-spanning segment. Residues 134–136 (ERW) carry the 'Ionic lock' involved in activated form stabilization motif. Residues 134–152 (ERWMVVCKPVSNFRFGENH) are Cytoplasmic-facing. Residues 153-173 (AIMGVAFTWVMACSCAVPPLV) traverse the membrane as a helical segment. At 174 to 202 (GWSRYIPEGMQCSCGVDYYTRTPGVNNES) the chain is on the extracellular side. The N-linked (GlcNAc...) asparagine glycan is linked to Asn200. Residues 203–224 (FVIYMFIVHFFIPLIVIFFCYG) form a helical membrane-spanning segment. Residues 225-252 (RLVCTVKEAAAQQQESETTQRAEREVTR) lie on the Cytoplasmic side of the membrane. The chain crosses the membrane as a helical span at residues 253 to 274 (MVIIMVIAFLICWLPYAGVAWY). Topologically, residues 275–286 (IFTHQGSEFGPV) are extracellular. Residues 287 to 308 (FMTLPAFFAKTSAVYNPCIYIC) traverse the membrane as a helical segment. The residue at position 296 (Lys296) is an N6-(retinylidene)lysine. Residues 309-354 (MNKQFRHCMITTLCCGKNPFEEEEGASTTASKTEASSVSSSSVSPA) lie on the Cytoplasmic side of the membrane. Residues 333–354 (GASTTASKTEASSVSSSSVSPA) form a disordered region. Positions 334-354 (ASTTASKTEASSVSSSSVSPA) are enriched in low complexity.

The protein belongs to the G-protein coupled receptor 1 family. Opsin subfamily. Post-translationally, phosphorylated on some or all of the serine and threonine residues present in the C-terminal region. Contains one covalently linked retinal chromophore. As to expression, retinal rod photoreceptor cells, predominantly in the outer segments (at protein level). Retinal rod photoreceptor cells.

The protein resides in the membrane. Its subcellular location is the cell projection. It localises to the cilium. It is found in the photoreceptor outer segment. Photoreceptor required for image-forming vision at low light intensity. While most salt water fish species use retinal as chromophore, most freshwater fish use 3-dehydroretinal, or a mixture of retinal and 3-dehydroretinal. Light-induced isomerization of 11-cis to all-trans retinal triggers a conformational change that activates signaling via G-proteins. Subsequent receptor phosphorylation mediates displacement of the bound G-protein alpha subunit by arrestin and terminates signaling. The chain is Rhodopsin (rho) from Danio rerio (Zebrafish).